Consider the following 74-residue polypeptide: Large ribosomal subunit protein uL29 (74 aa).

The protein belongs to the universal ribosomal protein uL29 family.

This chain is Large ribosomal subunit protein uL29, found in Streptomyces avermitilis (strain ATCC 31267 / DSM 46492 / JCM 5070 / NBRC 14893 / NCIMB 12804 / NRRL 8165 / MA-4680).